The following is a 515-amino-acid chain: 1-pyrroline-5-carboxylate dehydrogenase 1 (515 aa).

Catalysis depends on residues glutamate 286 and cysteine 320.

This sequence belongs to the aldehyde dehydrogenase family. RocA subfamily.

The enzyme catalyses L-glutamate 5-semialdehyde + NAD(+) + H2O = L-glutamate + NADH + 2 H(+). It functions in the pathway amino-acid degradation; L-proline degradation into L-glutamate; L-glutamate from L-proline: step 2/2. The protein is 1-pyrroline-5-carboxylate dehydrogenase 1 (rocA1) of Halalkalibacterium halodurans (strain ATCC BAA-125 / DSM 18197 / FERM 7344 / JCM 9153 / C-125) (Bacillus halodurans).